The following is a 389-amino-acid chain: MKKLLKSALLSAAFAGSVGSLQALPVGNPSDPSLLIDGTIWEGAAGDPCDPCATWCDAISLRAGFYGDYVFDRILKVDAPKTFSMGAKPTGSAAANYTTAVDRPNPAYNKHLHDAEWFTNAGFIALNIWDRFDVFCTLGASNGYIRGNSTAFNLVGLFGVKGTTVNANELPNVSLSNGVVELYTDTSFSWSVGARGALWECGCATLGAEFQYAQSKPKVEELNVICNVSQFSVNKPKGYKGVAFPLPTDAGVATATGTKSATINYHEWQVGASLSYRLNSLVPYIGVQWSRATFDADNIRIAQPKLPTAVLNLTAWNPSLLGNATALSTTDSFSDFMQIVSCQINKFKSRKACGVTVGATLVDADKWSLTAEARLINERAAHVSGQFRF.

Residues 1 to 23 (MKKLLKSALLSAAFAGSVGSLQA) form the signal peptide.

Belongs to the chlamydial porin (CP) (TC 1.B.2) family. As to quaternary structure, part of a disulfide cross-linked outer membrane complex (COMC) composed of the major outer membrane porin (MOMP), the small cysteine-rich protein (OmcA) and the large cysteine-rich periplasmic protein (OmcB).

Its subcellular location is the cell outer membrane. Functionally, in elementary bodies (EBs, the infectious stage, which is able to survive outside the host cell) provides the structural integrity of the outer envelope through disulfide cross-links with the small cysteine-rich protein and the large cysteine-rich periplasmic protein. It has been described in publications as the Sarkosyl-insoluble COMC (Chlamydia outer membrane complex), and serves as the functional equivalent of peptidoglycan. Its function is as follows. Permits diffusion of specific solutes through the outer membrane. This is Major outer membrane porin (ompA) from Chlamydia pneumoniae (Chlamydophila pneumoniae).